Reading from the N-terminus, the 483-residue chain is MNLKELLHNTKAKIYGKISSVEVRNLTRDSRNVGVGDIFIAKQGKHCDGNDFSHLAVENGAIAVASSIYNPFLPVVQIISSDLPRLEADLAAKYYGHPSQKLCVVGITGTNGKTTVSHLIKLLFDACDKPAGLIGTIEHILGNSRIQDGYTTPESCLLQKYLAKMVKSHLSAAVMEVSSIGLAVNRLANVDFDVGVLTNLTLDHLDFHSSFEEYKQAKLKLFSMLPSSGLAVVNNDLCDAAQFIEATQAQPITYGIEQHADYQASHVRFSPFGTDFDLLYKGETFACYSPLIGQHNIYNVLAAIAVTHQRLRCDLPHLISVIANVGAPRGRLEPIFSGPCPIYIDYAHTPDALDNVCQTLQALLPQDGRLIVVFGCGGDRDQSKRKIMAQVVEKYGFAVVTTDNPRGEDPEKIINEICSGFLKRNFSIEIDRKQAITYALSIASDRDIVLVAGKGHETYQIFKHQTIAFDDKEIVLGVLSSYV.

S30 is a binding site for UDP-N-acetyl-alpha-D-muramoyl-L-alanyl-D-glutamate. 109–115 (GTNGKTT) provides a ligand contact to ATP. UDP-N-acetyl-alpha-D-muramoyl-L-alanyl-D-glutamate contacts are provided by residues 151–152 (TT), S178, and R186. K218 is modified (N6-carboxylysine). Meso-2,6-diaminopimelate is bound by residues R380, 403-406 (DNPR), G453, and E457. Residues 403-406 (DNPR) carry the Meso-diaminopimelate recognition motif motif.

It belongs to the MurCDEF family. MurE subfamily. Requires Mg(2+) as cofactor. Post-translationally, carboxylation is probably crucial for Mg(2+) binding and, consequently, for the gamma-phosphate positioning of ATP.

The protein resides in the cytoplasm. It carries out the reaction UDP-N-acetyl-alpha-D-muramoyl-L-alanyl-D-glutamate + meso-2,6-diaminopimelate + ATP = UDP-N-acetyl-alpha-D-muramoyl-L-alanyl-gamma-D-glutamyl-meso-2,6-diaminopimelate + ADP + phosphate + H(+). The protein operates within cell wall biogenesis; peptidoglycan biosynthesis. Catalyzes the addition of meso-diaminopimelic acid to the nucleotide precursor UDP-N-acetylmuramoyl-L-alanyl-D-glutamate (UMAG) in the biosynthesis of bacterial cell-wall peptidoglycan. In Chlamydia abortus (strain DSM 27085 / S26/3) (Chlamydophila abortus), this protein is UDP-N-acetylmuramoyl-L-alanyl-D-glutamate--2,6-diaminopimelate ligase.